The chain runs to 132 residues: Small ribosomal subunit protein uS8 (132 aa).

It belongs to the universal ribosomal protein uS8 family. In terms of assembly, part of the 30S ribosomal subunit. Contacts proteins S5 and S12.

One of the primary rRNA binding proteins, it binds directly to 16S rRNA central domain where it helps coordinate assembly of the platform of the 30S subunit. This is Small ribosomal subunit protein uS8 from Brucella melitensis biotype 1 (strain ATCC 23456 / CCUG 17765 / NCTC 10094 / 16M).